The primary structure comprises 324 residues: Serpentine receptor class delta-30 (324 aa).

7 consecutive transmembrane segments (helical) span residues 5–25 (IIHS…MYLA), 38–58 (AIIT…FFVM), 83–103 (ACYV…IWMI), 124–144 (VFVA…WFSF), 176–196 (ITLI…YIWI), 227–247 (FQVF…SMFT), and 258–278 (AISV…ILFV). Positions 290–324 (KQPKPHPEMCGPIRSNTRTTSISVTNNSSHLSSAH) are disordered. Polar residues predominate over residues 303-324 (RSNTRTTSISVTNNSSHLSSAH).

Belongs to the nematode receptor-like protein srd family.

Its subcellular location is the membrane. The sequence is that of Serpentine receptor class delta-30 (srd-30) from Caenorhabditis elegans.